Consider the following 156-residue polypeptide: Peroxisome assembly protein 22 (156 aa).

A helical transmembrane segment spans residues 24 to 46 (LSIIAVGVLSTVAVTVGYLLYLY).

It belongs to the peroxin-22 family.

Its subcellular location is the peroxisome membrane. Its function is as follows. Involved in peroxisome biogenesis. The chain is Peroxisome assembly protein 22 (PEX22) from Kluyveromyces lactis (strain ATCC 8585 / CBS 2359 / DSM 70799 / NBRC 1267 / NRRL Y-1140 / WM37) (Yeast).